A 276-amino-acid polypeptide reads, in one-letter code: Elongation factor Ts (276 aa).

Residues 76-79 (TDFV) form an involved in Mg(2+) ion dislocation from EF-Tu region.

The protein belongs to the EF-Ts family.

It is found in the cytoplasm. Its function is as follows. Associates with the EF-Tu.GDP complex and induces the exchange of GDP to GTP. It remains bound to the aminoacyl-tRNA.EF-Tu.GTP complex up to the GTP hydrolysis stage on the ribosome. In Mycobacterium leprae (strain Br4923), this protein is Elongation factor Ts.